The following is a 529-amino-acid chain: MGRMNVSMMRYLEGDHFRVLIAVEMGMKNHEVVPLALVSAIAGIHRGGVARTLNDLCKHSLVAFERSKKFDGYRLTIRGYDYLALRALCSREVVGSVGNQIGIGKESDVYVGGDPELNDLCLKFHRLGRTSFRKIKEKRDYHKKRKSASWLYLSRLAAAKEFAFLKALQERGFPVPKAVDVCRHLVVMQLVVGQTLCNVTHVEDAGALYDRLMALIVKMARHGVIHGDFNEFNLIMLEDERIVMIDFPQMVSIDHPNAEYYFDRDVTCVRTFFKRKFDYESEDWPKFDEVERKGNMDVLLEASGFTKKMALDLNKAYDEGDFLAHCEQELRNRQEEDLGEDEDDSDDSKSMEDIQEEPEDLEKDHEELQAQENTVKQQKIVLSQTTRFTDWLSDATNQLEAVDLDALKSEEGYKDIELPPEDFKRPADSENDDENDEDEEEGEEEDADGHVAVEEQVAKVVKKKRVPSGARSVASSAATFTAEDVKRRLALDRKRNKEKIRLKVKGKQSAVGRNRKDNKDVIAEYAGWI.

Residues 97–273 (VGNQIGIGKE…RDVTCVRTFF (177 aa)) enclose the Protein kinase domain. Residue Lys123 participates in ATP binding. The active-site Proton acceptor is the Asp228. Disordered regions lie at residues 331–366 (RNRQ…KDHE) and 411–452 (EGYK…GHVA). Residues 337–346 (DLGEDEDDSD) show a composition bias toward acidic residues. Residues 411-428 (EGYKDIELPPEDFKRPAD) are compositionally biased toward basic and acidic residues. A compositionally biased stretch (acidic residues) spans 429-447 (SENDDENDEDEEEGEEEDA).

This sequence belongs to the protein kinase superfamily. RIO-type Ser/Thr kinase family. It depends on Mg(2+) as a cofactor. Expressed in pharynx (metacorpus and posterior bulbus). Expression is restricted to adult stage.

It catalyses the reaction L-seryl-[protein] + ATP = O-phospho-L-seryl-[protein] + ADP + H(+). It carries out the reaction L-threonyl-[protein] + ATP = O-phospho-L-threonyl-[protein] + ADP + H(+). Required for larval development. The protein is Serine/threonine-protein kinase RIO2 of Caenorhabditis elegans.